The chain runs to 179 residues: O-acetyl-ADP-ribose deacetylase (179 aa).

A Macro domain is found at methionine 1–glycine 175. Substrate is bound by residues aspartate 11 to isoleucine 12, asparagine 25, glycine 33 to aspartate 35, and serine 122 to tyrosine 126. The Proton acceptor role is filled by aspartate 35.

It belongs to the MacroD-type family. YmdB subfamily. As to quaternary structure, homodimer. Interacts with RNase III.

It carries out the reaction 3''-O-acetyl-ADP-D-ribose + H2O = ADP-D-ribose + acetate + H(+). The catalysed reaction is 2''-O-acetyl-ADP-D-ribose + H2O = ADP-D-ribose + acetate + H(+). Its function is as follows. Deacetylates O-acetyl-ADP ribose to yield ADP-ribose and free acetate. Down-regulates ribonuclease 3 (RNase III) activity. Acts by interacting directly with the region of the ribonuclease that is required for dimerization/activation. The sequence is that of O-acetyl-ADP-ribose deacetylase from Salmonella gallinarum (strain 287/91 / NCTC 13346).